The following is a 342-amino-acid chain: tRNA dimethylallyltransferase (342 aa).

39-46 contributes to the ATP binding site; sequence GPTGSGKT. 41 to 46 is a substrate binding site; it reads TGSGKT. The interaction with substrate tRNA stretch occupies residues 64 to 67; that stretch reads DSMQ.

This sequence belongs to the IPP transferase family. In terms of assembly, monomer. Mg(2+) is required as a cofactor.

It catalyses the reaction adenosine(37) in tRNA + dimethylallyl diphosphate = N(6)-dimethylallyladenosine(37) in tRNA + diphosphate. Functionally, catalyzes the transfer of a dimethylallyl group onto the adenine at position 37 in tRNAs that read codons beginning with uridine, leading to the formation of N6-(dimethylallyl)adenosine (i(6)A). The sequence is that of tRNA dimethylallyltransferase from Chlamydia caviae (strain ATCC VR-813 / DSM 19441 / 03DC25 / GPIC) (Chlamydophila caviae).